Reading from the N-terminus, the 449-residue chain is METPAMFIKRCSRSIFLQVVIGLVIGVICGVGIPDLAVQMKPLGDGFIKLIKMLIALIVFCVVVNGISGAGDLKKVGRIGLKSVIYFEILTTIALVLGLVVAYSLGLGSGANIHLNELPAGDVALYTGRTQEIHGPVAFLMGLIPTSVFSAFAENDILQVLLFSVLFGSALNLVGEQASGVARLINEFSHIVFRIMGMIVRLAPLGVFGAVAFTTARYGVDSLSHLGALVLVFYATCLVFVMAVLGSVLRLSGVRMLPFLRYFREELLIVMGTASSDAVLPQVMRKLEHMGIRSSTVGLVIPTGYSFNLDGFSIYLTLAVVFIAHVTGTPLAMTDLITILLVSLVTSKGAHGIPGSALVILAATLTAVPAIPVAGLVLVLSVDWFMGIGRALTNLIGNCVATVTIARWENDIDMPRAQAILDGRLEAPAKADGEPLKRSAVAGEGKLHG.

8 helical membrane passes run 16-38, 53-71, 84-106, 157-176, 197-219, 229-251, 311-333, and 358-380; these read FLQV…DLAV, MLIA…SGAG, VIYF…YSLG, ILQV…LVGE, GMIV…ARYG, LVLV…VLRL, GFSI…PLAM, and LVIL…VLVL.

The protein belongs to the dicarboxylate/amino acid:cation symporter (DAACS) (TC 2.A.23) family.

The protein resides in the cell inner membrane. Responsible for the transport of dicarboxylates such as succinate, fumarate, and malate from the periplasm across the membrane. This Pseudomonas aeruginosa (strain ATCC 15692 / DSM 22644 / CIP 104116 / JCM 14847 / LMG 12228 / 1C / PRS 101 / PAO1) protein is C4-dicarboxylate transport protein 1 (dctA1).